A 440-amino-acid polypeptide reads, in one-letter code: Enolase (440 aa).

The substrate site is built by His159 and Glu168. Catalysis depends on Glu211, which acts as the Proton donor. Mg(2+) contacts are provided by Asp245, Glu296, and Asp321. Positions 296 and 321 each coordinate substrate. Lys346 acts as the Proton acceptor in catalysis. Residues 373–376 (SHRS) and Lys397 contribute to the substrate site.

The protein belongs to the enolase family. As to quaternary structure, homodimer. Mg(2+) is required as a cofactor.

Its subcellular location is the cytoplasm. The catalysed reaction is (2R)-2-phosphoglycerate = phosphoenolpyruvate + H2O. The protein operates within carbohydrate degradation; glycolysis; pyruvate from D-glyceraldehyde 3-phosphate: step 4/5. This Tuber borchii (White truffle) protein is Enolase (eno-1).